We begin with the raw amino-acid sequence, 152 residues long: Large ribosomal subunit protein uL15 (152 aa).

Over residues Met1 to Ser13 the composition is skewed to polar residues. A disordered region spans residues Met1–Leu62. A compositionally biased stretch (basic residues) spans Thr31–Lys40.

Belongs to the universal ribosomal protein uL15 family. Part of the 50S ribosomal subunit.

Functionally, binds to the 23S rRNA. This Desulfotalea psychrophila (strain LSv54 / DSM 12343) protein is Large ribosomal subunit protein uL15.